A 176-amino-acid polypeptide reads, in one-letter code: Endoribonuclease YbeY (176 aa).

Zn(2+)-binding residues include His-128, His-132, and His-138.

Belongs to the endoribonuclease YbeY family. Requires Zn(2+) as cofactor.

The protein resides in the cytoplasm. Single strand-specific metallo-endoribonuclease involved in late-stage 70S ribosome quality control and in maturation of the 3' terminus of the 16S rRNA. The chain is Endoribonuclease YbeY from Zymomonas mobilis subsp. mobilis (strain ATCC 31821 / ZM4 / CP4).